The sequence spans 410 residues: Single Ig IL-1-related receptor (410 aa).

The Extracellular segment spans residues 1 to 118 (MPGVCDRAPD…TLQRAGPTSH (118 aa)). The 101-residue stretch at 9 to 109 (PDFLSPSEDQ…IQNISFSSFT (101 aa)) folds into the Ig-like C2-type domain. Residues N31, N73, N86, and N102 are each glycosylated (N-linked (GlcNAc...) asparagine). An intrachain disulfide couples C32 to C98. A helical; Signal-anchor for type III membrane protein transmembrane segment spans residues 119–139 (VAAVLASLLVLLALLLAALLY). Residues 140 to 410 (VKCRLNVLLW…FYCLVSKDDM (271 aa)) are Cytoplasmic-facing. The 145-residue stretch at 163-307 (KLYDAYVSYS…DFWKEVQLAL (145 aa)) folds into the TIR domain. Residues 340–390 (EGRALDSEVDPDPEGDLGVRGPVFGEPSAPPHTSGVSLGESRSSEVDVSDL) are disordered. Position 383 is a phosphoserine (S383).

The protein belongs to the interleukin-1 receptor family. Interacts with IL1R1, IRAK1, TLR4, TLR5, TLR9 and TRAF6. Upon IL-1 stimulation found in a complex at least composed of IL1R1, SIGIRR, MYD88, IRAK1 and TRAF6. Upon stimulation with LPC found in a complex at least composed of TLR4, SIG1IR, MYD88, IRAK1 and TRAF6. Interacts with PALM3. In terms of tissue distribution, mainly expressed in epithelial tissues such as kidney, lung and gut.

It localises to the membrane. Acts as a negative regulator of the Toll-like and IL-1R receptor signaling pathways. Attenuates the recruitment of receptor-proximal signaling components to the TLR4 receptor, probably through an TIR-TIR domain interaction with TLR4. Through its extracellular domain interferes with the heterodimerization of Il1R1 and IL1RAP. This chain is Single Ig IL-1-related receptor (SIGIRR), found in Homo sapiens (Human).